Here is a 95-residue protein sequence, read N- to C-terminus: UPF0235 protein AnaeK_1146 (95 aa).

The protein belongs to the UPF0235 family.

The chain is UPF0235 protein AnaeK_1146 from Anaeromyxobacter sp. (strain K).